A 736-amino-acid polypeptide reads, in one-letter code: MYYKVAVSGSGKVLNVFSSEELLIGERVWLNWRNGKVKGYVLERSLSHENEATPSERDGKSFLSEGHVEIAKWVSERFFSPLGMVFDLFFPQGIDDYKEEVVVSESPFLDFDRMTLRDFLENFGEKALKEMVKKGLVRVEKNFYVKEPRPRVKKRLFLKKRISEIIREHLTVKQRMVVEYLQFNDGVPLEELLEDLEVSKSVIETLQRKNIVEIVSGDVFPKKRRILRGDFKGNISKENLFFGPTGSGKTEALFELIDVYSRKGTVLFLVPEVSVLTHTLSRLKGAFPDLKIGIYHSYLSRARKNLEWYKAASGKIDVLLGTRSAVFVPVKNLSLLIVDEEHDESFYQHTRPSYDAIVVARKISEVFDVPIILSSATPDLWTYREAKEGRIRTFNFTRRFGSLSVEVVDMRNEEKIGSFAKKTLDRIEETLEEGKRVLIYVRRKGFWGRVQCEVCGYVLKCENCDVSLVYHSDTHSLKCHQCGREYGLVESCPRCGGRLVGRTAGTERVERELKRYFPTRRIARVDREVVDNIMELESYIDKLIRGEIDILVGTRLITKSLSVPEIGLVCIMDVDSLIFNPDYSSSLRTFQLVVQALGRASRGDQGKAIIQTYNPEDTIIRKALEEDVNGFYAEELERRKALGYPPYRHLIQVAVKSKNPEVGKNSLTSLKEFLKGEEVLGPVEHWVFKLRGFYRHHLIVKTEDLERVLPKLEKALRILGIDAIVRVDPPTLEVSD.

Residues 230 to 396 (DFKGNISKEN…KEGRIRTFNF (167 aa)) enclose the Helicase ATP-binding domain. 243–250 (GPTGSGKT) is an ATP binding site. The DEAH box motif lies at 339 to 342 (DEEH). Residues cysteine 452, cysteine 455, cysteine 461, cysteine 464, cysteine 479, cysteine 482, cysteine 492, and cysteine 495 each coordinate Zn(2+). The Helicase C-terminal domain occupies 487–643 (GLVESCPRCG…EELERRKALG (157 aa)).

It belongs to the helicase family. PriA subfamily. As to quaternary structure, component of the replication restart primosome. Zn(2+) is required as a cofactor.

It catalyses the reaction Couples ATP hydrolysis with the unwinding of duplex DNA by translocating in the 3'-5' direction.. The catalysed reaction is ATP + H2O = ADP + phosphate + H(+). In terms of biological role, initiates the restart of stalled replication forks, which reloads the replicative helicase on sites other than the origin of replication. Recognizes and binds to abandoned replication forks and remodels them to uncover a helicase loading site. Promotes assembly of the primosome at these replication forks. This is Replication restart protein PriA from Thermotoga maritima (strain ATCC 43589 / DSM 3109 / JCM 10099 / NBRC 100826 / MSB8).